The chain runs to 209 residues: Dual specificity protein phosphatase 22 (209 aa).

The region spanning 4 to 144 (GMNKILTGLF…LEDFGKCEVH (141 aa)) is the Tyrosine-protein phosphatase domain. Cysteine 88 serves as the catalytic Phosphocysteine intermediate. Residues 169-192 (LDKHKQQEAAESQNATSSGRQWNS) form a disordered region. Residues 177–190 (AAESQNATSSGRQW) show a composition bias toward polar residues.

It belongs to the protein-tyrosine phosphatase family. Non-receptor class dual specificity subfamily.

The protein resides in the cytoplasm. It is found in the nucleus. It carries out the reaction O-phospho-L-tyrosyl-[protein] + H2O = L-tyrosyl-[protein] + phosphate. It catalyses the reaction O-phospho-L-seryl-[protein] + H2O = L-seryl-[protein] + phosphate. The catalysed reaction is O-phospho-L-threonyl-[protein] + H2O = L-threonyl-[protein] + phosphate. Functionally, activates the Jnk signaling pathway. Dephosphorylates and deactivates p38 and stress-activated protein kinase/c-Jun N-terminal kinase (SAPK/JNK). The polypeptide is Dual specificity protein phosphatase 22 (dusp22) (Xenopus laevis (African clawed frog)).